Here is a 280-residue protein sequence, read N- to C-terminus: Tryptophan synthase alpha chain (280 aa).

Residues Glu-50 and Asp-61 each act as proton acceptor in the active site.

The protein belongs to the TrpA family. Tetramer of two alpha and two beta chains.

The enzyme catalyses (1S,2R)-1-C-(indol-3-yl)glycerol 3-phosphate + L-serine = D-glyceraldehyde 3-phosphate + L-tryptophan + H2O. The protein operates within amino-acid biosynthesis; L-tryptophan biosynthesis; L-tryptophan from chorismate: step 5/5. Functionally, the alpha subunit is responsible for the aldol cleavage of indoleglycerol phosphate to indole and glyceraldehyde 3-phosphate. In Methylorubrum extorquens (strain CM4 / NCIMB 13688) (Methylobacterium extorquens), this protein is Tryptophan synthase alpha chain.